A 215-amino-acid chain; its full sequence is Cytochrome b6 (215 aa).

Residues 32-52 form a helical membrane-spanning segment; that stretch reads IFYCLGGITFTSFLVQVATGF. Cys-35 contacts heme c. 2 residues coordinate heme b: His-86 and His-100. 3 helical membrane-spanning segments follow: residues 90–110, 116–136, and 186–206; these read ASMM…TGGF, LTWV…VTGY, and LHTF…FLMI. Heme b is bound by residues His-187 and His-202.

It belongs to the cytochrome b family. PetB subfamily. The 4 large subunits of the cytochrome b6-f complex are cytochrome b6, subunit IV (17 kDa polypeptide, PetD), cytochrome f and the Rieske protein, while the 4 small subunits are PetG, PetL, PetM and PetN. The complex functions as a dimer. Heme b is required as a cofactor. Requires heme c as cofactor.

It localises to the plastid. The protein resides in the chloroplast thylakoid membrane. Functionally, component of the cytochrome b6-f complex, which mediates electron transfer between photosystem II (PSII) and photosystem I (PSI), cyclic electron flow around PSI, and state transitions. This Oltmannsiellopsis viridis (Marine flagellate) protein is Cytochrome b6.